The sequence spans 210 residues: Oxygen-insensitive NADPH nitroreductase (210 aa).

150–155 (GVSLMG) provides a ligand contact to NADP(+).

This sequence belongs to the nitroreductase family.

Reduction of a variety of nitroaromatic compounds using NADPH as source of reducing equivalents; two electrons are transferred. In Helicobacter pylori (strain J99 / ATCC 700824) (Campylobacter pylori J99), this protein is Oxygen-insensitive NADPH nitroreductase (rdxA).